The following is a 619-amino-acid chain: 4-hydroxyphenylalkanoate adenylyltransferase (619 aa).

Belongs to the ATP-dependent AMP-binding enzyme family.

The enzyme catalyses 17-(4-hydroxyphenyl)heptadecanoate + holo-[(phenol)carboxyphthiodiolenone synthase] + ATP = 17-(4-hydroxyphenyl)heptadecanoyl-[(phenol)carboxyphthiodiolenone synthase] + AMP + diphosphate. The catalysed reaction is 19-(4-hydroxyphenyl)nonadecanoate + holo-[(phenol)carboxyphthiodiolenone synthase] + ATP = 19-(4-hydroxyphenyl)nonadecanoyl-[(phenol)carboxyphthiodiolenone synthase] + AMP + diphosphate. It participates in lipid metabolism; fatty acid biosynthesis. Its function is as follows. Catalyzes the activation of long-chain fatty acids as acyl-adenylates (acyl-AMP), which are then transferred to the multifunctional polyketide synthase PpsA for further chain extension. Involved in the biosynthesis of phenolphthiocerol, which is an important intermediate in the biosynthesis of phenolic glycolipid (PGL), also called mycosid B. The sequence is that of 4-hydroxyphenylalkanoate adenylyltransferase (fadD29) from Mycobacterium bovis (strain ATCC BAA-935 / AF2122/97).